The sequence spans 106 residues: Small ribosomal subunit protein bS18 (106 aa).

Positions 1–39 are disordered; the sequence is MNGRNNDMGRNGGADYDDRDFGRTPDLNADAPGRRRTGR.

This sequence belongs to the bacterial ribosomal protein bS18 family. In terms of assembly, part of the 30S ribosomal subunit. Forms a tight heterodimer with protein bS6.

Functionally, binds as a heterodimer with protein bS6 to the central domain of the 16S rRNA, where it helps stabilize the platform of the 30S subunit. The protein is Small ribosomal subunit protein bS18 of Sorangium cellulosum (strain So ce56) (Polyangium cellulosum (strain So ce56)).